The sequence spans 507 residues: Histidine ammonia-lyase (507 aa).

A cross-link (5-imidazolinone (Ala-Gly)) is located at residues 141–143; that stretch reads ASG. Ser-142 bears the 2,3-didehydroalanine (Ser) mark.

Belongs to the PAL/histidase family. Contains an active site 4-methylidene-imidazol-5-one (MIO), which is formed autocatalytically by cyclization and dehydration of residues Ala-Ser-Gly.

The protein localises to the cytoplasm. It carries out the reaction L-histidine = trans-urocanate + NH4(+). It participates in amino-acid degradation; L-histidine degradation into L-glutamate; N-formimidoyl-L-glutamate from L-histidine: step 1/3. The protein is Histidine ammonia-lyase of Burkholderia vietnamiensis (strain G4 / LMG 22486) (Burkholderia cepacia (strain R1808)).